Here is a 547-residue protein sequence, read N- to C-terminus: Collagen EMF1-alpha (547 aa).

Disordered stretches follow at residues 1–99 (GVPG…APGV) and 116–311 (GPDG…GGGI). Positions 1-280 (GVPGPNGDVG…QGPRGGQGPK (280 aa)) are triple-helical region. Composition is skewed to low complexity over residues 27 to 69 (QGPD…IRGQ) and 160 to 175 (QGSK…VGPQ). K187 carries the post-translational modification Allysine. The segment covering 219–228 (VKGEKGEVGD) has biased composition (basic and acidic residues). The span at 246 to 271 (DAGPAGPIGDAGIQGPPGQDGPTGAQ) shows a compositional bias: low complexity. Residues 272–281 (GPRGGQGPKG) are compositionally biased toward gly residues. Residues 308–336 (GGGIILVPVNDQNPTRSPVSGSVFYRGQA) are telopeptide. The propeptide at 337 to 547 (EETDVNLGSV…GFEMGPACFY (211 aa)) is C-terminal propeptide. Residues 343–547 (LGSVADVIEL…GFEMGPACFY (205 aa)) form the Fibrillar collagen NC1 domain. Residues N381 and N406 are each glycosylated (N-linked (GlcNAc...) asparagine).

It belongs to the fibrillar collagen family.

It localises to the secreted. It is found in the extracellular space. The protein resides in the extracellular matrix. This Ephydatia muelleri (Mueller's freshwater sponge) protein is Collagen EMF1-alpha (COLF1).